Here is a 90-residue protein sequence, read N- to C-terminus: Beta-microseminoprotein (90 aa).

5 cysteine pairs are disulfide-bonded: Cys-2-Cys-16, Cys-34-Cys-70, Cys-37-Cys-46, Cys-39-Cys-47, and Cys-61-Cys-84. Valine amide is present on Val-90.

The protein belongs to the beta-microseminoprotein family.

The protein resides in the secreted. This is Beta-microseminoprotein (MSMB) from Struthio camelus (Common ostrich).